A 159-amino-acid polypeptide reads, in one-letter code: Phosphopantetheine adenylyltransferase (159 aa).

Position 9 (S9) interacts with substrate. Residues 9–10 and H17 each bind ATP; that span reads SF. K41, L73, and K87 together coordinate substrate. Residues 88–90, E98, and 123–129 each bind ATP; these read GLR and NIHISSS.

This sequence belongs to the bacterial CoaD family. Homohexamer. Requires Mg(2+) as cofactor.

Its subcellular location is the cytoplasm. It catalyses the reaction (R)-4'-phosphopantetheine + ATP + H(+) = 3'-dephospho-CoA + diphosphate. Its pathway is cofactor biosynthesis; coenzyme A biosynthesis; CoA from (R)-pantothenate: step 4/5. Functionally, reversibly transfers an adenylyl group from ATP to 4'-phosphopantetheine, yielding dephospho-CoA (dPCoA) and pyrophosphate. This Clostridium beijerinckii (strain ATCC 51743 / NCIMB 8052) (Clostridium acetobutylicum) protein is Phosphopantetheine adenylyltransferase.